The following is a 454-amino-acid chain: OTU domain-containing protein 1 (454 aa).

Disordered stretches follow at residues 36–64 and 116–257; these read QSAS…REAA and LPPP…SRAD. Residues 52 to 64 are compositionally biased toward low complexity; that stretch reads RPPAAATEPREAA. Positions 116–125 are enriched in pro residues; it reads LPPPSAPSPP. Composition is skewed to basic and acidic residues over residues 151–164, 193–210, and 219–229; these read DAPD…EHRQ, GEER…RASG, and ALRRQDPEAEA. Residues 282–411 form the OTU domain; it reads KYRFHIIPDG…NGHYDAVFDH (130 aa). A cys-loop region spans residues 287 to 293; sequence IIPDGNC. The active site involves D290. The active-site Nucleophile is the C293. A his-loop region spans residues 342-352; the sequence is AAQDGAWAGYP. The variable-loop stretch occupies residues 399–404; it reads WLSNGH. H404 is a catalytic residue. Residues 430–449 form the UIM domain; sequence KRDEELAKSMAISLSKMYIE.

It catalyses the reaction Thiol-dependent hydrolysis of ester, thioester, amide, peptide and isopeptide bonds formed by the C-terminal Gly of ubiquitin (a 76-residue protein attached to proteins as an intracellular targeting signal).. Functionally, deubiquitinating enzyme that specifically hydrolyzes 'Lys-63'-linked polyubiquitin to monoubiquitin. Required for the stability and translation of a subset mRNAs with a high abundance of rare codons by mediating deubiquitination of 40S ribosomal protein RPS10/eS10, thereby antagonizing ZNF598-mediated 40S ubiquitination. The abundance of rare codons in mRNAs can limit the translation rate and can lead to ribosome collisions that trigger activation of ribosome quality control (RQC) pathway by ZNF598. OTUD1-mediated deubiquitination prevents activation of the RQC and subsequent dissociation of ribosomes and stimulates formation of polysomes and translation. This Mus musculus (Mouse) protein is OTU domain-containing protein 1 (Otud1).